Here is a 506-residue protein sequence, read N- to C-terminus: AMP phosphorylase (506 aa).

Residues glycine 167, 193 to 198, and threonine 202 contribute to the AMP site; that span reads SRAITG. The active-site Proton donor is the aspartate 255. Serine 263 and lysine 287 together coordinate AMP.

It belongs to the thymidine/pyrimidine-nucleoside phosphorylase family. Type 2 subfamily.

The enzyme catalyses AMP + phosphate = alpha-D-ribose 1,5-bisphosphate + adenine. It carries out the reaction CMP + phosphate = cytosine + alpha-D-ribose 1,5-bisphosphate. It catalyses the reaction UMP + phosphate = alpha-D-ribose 1,5-bisphosphate + uracil. Functionally, catalyzes the conversion of AMP and phosphate to adenine and ribose 1,5-bisphosphate (R15P). Exhibits phosphorylase activity toward CMP and UMP in addition to AMP. Functions in an archaeal AMP degradation pathway, together with R15P isomerase and RubisCO. The polypeptide is AMP phosphorylase (Methanosarcina acetivorans (strain ATCC 35395 / DSM 2834 / JCM 12185 / C2A)).